Here is a 293-residue protein sequence, read N- to C-terminus: Mimecan (293 aa).

A signal peptide spans 1–19; it reads MKTLQATFFLVAFVPLVKP. The N-linked (GlcNAc...) asparagine glycan is linked to Asn60. LRR repeat units follow at residues 107–126, 127–150, 151–174, 175–194, 195–220, 221–241, and 242–272; these read EAVPPLPKETAYLYARFNKI, KRIAVSDFADITTLRRIDFSGNMI, EEIEDGAFSKLLLLEELSLAENRL, VKLPVLPPKLTTFNANQNRI, KSRGIKNNAFKKLTNLAYLYLGHNAL, ESVPLNLPESLRILHLQHNNI, and TTITDDTFCKSNNTRYIRTRMDEIRMEGNPI. Residues Asn240 and Asn253 are each glycosylated (N-linked (GlcNAc...) asparagine). Cys250 and Cys283 form a disulfide bridge.

Belongs to the small leucine-rich proteoglycan (SLRP) family. SLRP class III subfamily. In terms of processing, contains keratan sulfate. In terms of tissue distribution, expressed in many tissues.

It is found in the secreted. It localises to the extracellular space. Its subcellular location is the extracellular matrix. In terms of biological role, induces bone formation in conjunction with TGF-beta-1 or TGF-beta-2. The sequence is that of Mimecan (OGN) from Coturnix japonica (Japanese quail).